Here is an 89-residue protein sequence, read N- to C-terminus: NADH-ubiquinone oxidoreductase chain 4L (89 aa).

3 consecutive transmembrane segments (helical) span residues 1-21 (MNITLILFLIGILGFVLNRKN), 22-42 (IILMLISIEIMLLAITFLILV), and 57-77 (IYIIVVAGAESAIGLAILVAF).

It belongs to the complex I subunit 4L family.

It is found in the mitochondrion membrane. It carries out the reaction a ubiquinone + NADH + 5 H(+)(in) = a ubiquinol + NAD(+) + 4 H(+)(out). Functionally, core subunit of the mitochondrial membrane respiratory chain NADH dehydrogenase (Complex I) that is believed to belong to the minimal assembly required for catalysis. Complex I functions in the transfer of electrons from NADH to the respiratory chain. The immediate electron acceptor for the enzyme is believed to be ubiquinone. This chain is NADH-ubiquinone oxidoreductase chain 4L (ndh-4L), found in Neurospora crassa (strain ATCC 24698 / 74-OR23-1A / CBS 708.71 / DSM 1257 / FGSC 987).